The chain runs to 102 residues: Small ribosomal subunit protein uS10 (102 aa).

The protein belongs to the universal ribosomal protein uS10 family. Part of the 30S ribosomal subunit.

In terms of biological role, involved in the binding of tRNA to the ribosomes. This is Small ribosomal subunit protein uS10 from Paracoccus denitrificans (strain Pd 1222).